A 130-amino-acid polypeptide reads, in one-letter code: MPGLTPPVNYEQVYKVLAIGFLLCASIYCLRSNHLPHVGDNIHSLPHGGNYADGTKRVQYFRPHSSTSTNHKYTALCAVLTLSLLIFAQTRLAAGNRITSVSICHHCSSQGSLSGGNHGRVSGHSELPTT.

Topologically, residues 1 to 12 (MPGLTPPVNYEQ) are cytoplasmic. A helical transmembrane segment spans residues 13–30 (VYKVLAIGFLLCASIYCL). The Lumenal portion of the chain corresponds to 31–72 (RSNHLPHVGDNIHSLPHGGNYADGTKRVQYFRPHSSTSTNHK). The chain crosses the membrane as a helical span at residues 73–90 (YTALCAVLTLSLLIFAQT). Topologically, residues 91–130 (RLAAGNRITSVSICHHCSSQGSLSGGNHGRVSGHSELPTT) are cytoplasmic. The segment at 110-130 (QGSLSGGNHGRVSGHSELPTT) is disordered.

This sequence belongs to the Tymovirales TGBp2 protein family.

It is found in the host endoplasmic reticulum membrane. Plays a role in viral cell-to-cell propagation, by facilitating genome transport to neighboring plant cells through plasmosdesmata,. This Narcissus pseudonarcissus (Daffodil) protein is Movement protein TGB2.